A 373-amino-acid polypeptide reads, in one-letter code: MALSKAFGQKPVKFQLEDGGDFYMIGSEVGNYLRMFRGSLYKRYPSLWRKLASVEERKKIVESSHDHGYTQLATSVTLLKASEVEEILDGNDEKYKAVSISTEPPAYLREQKAKRNSQWVPTLPNSSHHLDAVPCSTTINRSRLGRDKKRTFPLCFDDHDPAVIHENASQSEVLVPIRLDMEIEGQKLRDAFTWNMNEKLMTPEMFAEILCDDLDLNPLAFVPAIPSAIRQQIESYPTDAILEEQTDQRVIIKLNIHVGNISLVDQFEWDMSEKENSPEKFALKLCSELGQGGEFVTTIAYSIRGQLSWHQKAYAFSENPLPTVEIAIRNTGAADQWCPLLETLTDAEMEKKIRDQDRNTRRIRRLANTAPGW.

Residues 1–101 (MALSKAFGQK…DEKYKAVSIS (101 aa)) form a DNA-binding region.

It belongs to the SNF5 family. Component of the multiprotein chromatin-remodeling complexes SWI/SNF. Component of neural progenitors-specific chromatin remodeling complex (npBAF complex) and the neuron-specific chromatin remodeling complex (nBAF complex). Component of the BAF (SWI/SNF) chromatin remodeling complex. Component of the SWI/SNF-B (PBAF) chromatin remodeling complex. Binds to double-stranded DNA.

The protein localises to the nucleus. In terms of biological role, involved in chromatin-remodeling. Core component of the BAF (SWI/SNF) complex. This ATP-dependent chromatin-remodeling complex plays important roles in cell proliferation and differentiation, in cellular antiviral activities and inhibition of tumor formation. Belongs to the neural progenitors-specific chromatin remodeling complex (npBAF complex) and the neuron-specific chromatin remodeling complex (nBAF complex) and may play a role in neural development. The polypeptide is SWI/SNF-related matrix-associated actin-dependent regulator of chromatin subfamily B member 1 (smarcb1) (Dichotomyctere fluviatilis (Green pufferfish)).